The chain runs to 147 residues: UPF0251 protein NT01CX_1491 (147 aa).

Belongs to the UPF0251 family.

This Clostridium novyi (strain NT) protein is UPF0251 protein NT01CX_1491.